The following is a 72-amino-acid chain: UPF0150 protein jhp_0960 (72 aa).

The protein belongs to the UPF0150 family.

This is UPF0150 protein jhp_0960 from Helicobacter pylori (strain J99 / ATCC 700824) (Campylobacter pylori J99).